The sequence spans 886 residues: Valine--tRNA ligase (886 aa).

Residues 43–53 carry the 'HIGH' region motif; that stretch reads PYPTGRMHLGH. The 'KMSKS' region motif lies at 528 to 532; the sequence is KMSKS. ATP is bound at residue Lys-531.

Belongs to the class-I aminoacyl-tRNA synthetase family. ValS type 2 subfamily.

The protein localises to the cytoplasm. The catalysed reaction is tRNA(Val) + L-valine + ATP = L-valyl-tRNA(Val) + AMP + diphosphate. In terms of biological role, catalyzes the attachment of valine to tRNA(Val). As ValRS can inadvertently accommodate and process structurally similar amino acids such as threonine, to avoid such errors, it has a 'posttransfer' editing activity that hydrolyzes mischarged Thr-tRNA(Val) in a tRNA-dependent manner. This Methanococcus maripaludis (strain DSM 14266 / JCM 13030 / NBRC 101832 / S2 / LL) protein is Valine--tRNA ligase.